The primary structure comprises 315 residues: Probable cell division protein WhiA (315 aa).

A DNA-binding region (H-T-H motif) is located at residues 280 to 313 (SLKELGQMLDPQVGKSGINHRLRKIEKIAEELRT).

It belongs to the WhiA family.

Involved in cell division and chromosome segregation. This Clostridium botulinum (strain Alaska E43 / Type E3) protein is Probable cell division protein WhiA.